Here is a 348-residue protein sequence, read N- to C-terminus: Calcium homeostasis modulator protein 1 (348 aa).

Topologically, residues 1-20 (MDKFRMIFQFLQSNQESFMN) are cytoplasmic. The tract at residues 9–36 (QFLQSNQESFMNGICGIMALASAQMYSA) is central pore. The chain crosses the membrane as a helical span at residues 21 to 36 (GICGIMALASAQMYSA). The Extracellular portion of the chain corresponds to 37-48 (FDFNCPCLPGYN). Cystine bridges form between Cys41–Cys126 and Cys43–Cys160. Residues 49–71 (VVYSLGILLTPPLVLFLLGLVMN) traverse the membrane as a helical segment. The interval 62 to 69 (VLFLLGLV) is phospholipid-binding. Residues 72–98 (NNISMLAEEWKRPAGRRAKDPAVLRYM) are Cytoplasmic-facing. Residues 99–124 (FCSMAQRALIAPVVWVAVTLLDGKCF) form a helical membrane-spanning segment. Residue Cys100 is the site of S-palmitoyl cysteine attachment. Residues 104–116 (QRALIAPVVWVAV) form a phospholipid-binding region. The Extracellular segment spans residues 125 to 179 (LCAFCTAVPVATLGNGSLVPGLPAPELARLLARVPCPEIYDGNWLLAREVAVRYL). Asn139 carries N-linked (GlcNAc...) asparagine glycosylation. The chain crosses the membrane as a helical span at residues 180-205 (RCISQALGWSFVLLTTLLAFVVRSVR). Residues 191-201 (VLLTTLLAFVV) form a phospholipid-binding region. Residues 206–348 (PCFTQVAFLK…KEVATYFSKV (143 aa)) lie on the Cytoplasmic side of the membrane. Cys207 carries S-palmitoyl cysteine lipidation. The tract at residues 324–348 (LMSNGWAGGEPRPPRKEVATYFSKV) is disordered.

This sequence belongs to the CALHM family. In terms of assembly, oligomerizes to form hexamers and octamers. Does not form gap junctions. Associates with CALHM3 as a pore-forming subunit in a hetero-hexameric channel complex. Post-translationally, N-glycosylated. Assembly with CALHM3 is associated with N-glycan remodeling and formation of hybrid complex- and high mannose-type glycochains. This N-glycan processing regulates channel trafficking and gating kinetics. In terms of processing, palmitoylated by ZDHHC3, ZDHHC20 and possibly ZDHHC7. Palmitoylation regulates voltage-dependent gating of the channel by shifting it toward more depolarized potentials. Specifically expressed in type II taste bud cells (at protein level). Not expressed in brain.

Its subcellular location is the cell membrane. It localises to the endoplasmic reticulum membrane. The protein localises to the basolateral cell membrane. It catalyses the reaction ATP(in) = ATP(out). The enzyme catalyses Ca(2+)(in) = Ca(2+)(out). The catalysed reaction is Mg(2+)(in) = Mg(2+)(out). It carries out the reaction Na(+)(in) = Na(+)(out). It catalyses the reaction K(+)(in) = K(+)(out). The enzyme catalyses Li(+)(in) = Li(+)(out). The catalysed reaction is Rb(+)(in) = Rb(+)(out). It carries out the reaction Cs(+)(in) = Cs(+)(out). It catalyses the reaction chloride(in) = chloride(out). With respect to regulation, regulated by membrane voltage and extracellular Ca(2+). Inhibited by Gd(3+), ruthenium red, and Zn(2+) and partially inhibited by 2-aminoethoxydiphenyl borate. Its function is as follows. Pore-forming subunit of gustatory voltage-gated ion channels required for sensory perception of sweet, bitter and umami tastes. With CALHM3 forms a fast-activating voltage-gated ATP-release channel in type II taste bud cells, ATP acting as a neurotransmitter to activate afferent neural gustatory pathways. Acts both as a voltage-gated and calcium-activated ion channel: mediates neuronal excitability in response to membrane depolarization and low extracellular Ca(2+) concentration. Has poor ion selectivity and forms a wide pore (around 14 Angstroms) that mediates permeation of small ions including Ca(2+), Na(+), K(+) and Cl(-), as well as larger ions such as ATP(4-). Mediates Ca(2+) influx and downstream activation of the ERK1 and ERK2 cascade in neurons. Triggers endoplasmic reticulum stress by reducing the calcium content of the endoplasmic reticulum. May indirectly control amyloid precursor protein (APP) proteolysis and aggregated amyloid-beta (Abeta) peptides levels in a Ca(2+) dependent manner. This is Calcium homeostasis modulator protein 1 from Mus musculus (Mouse).